A 449-amino-acid chain; its full sequence is 23S rRNA (uracil(1939)-C(5))-methyltransferase RlmD (449 aa).

Residues 15-73 enclose the TRAM domain; it reads KAIPAKNLTVTVTSLDPFGQGVARHEGKTVFVTGVLPGEQAEVQLTEDKRQFSHAKLKR. [4Fe-4S] cluster-binding residues include Cys86, Cys92, Cys95, and Cys173. S-adenosyl-L-methionine-binding residues include Gln276, Phe305, Asn310, Glu326, Asn353, and Asp374. Residue Cys400 is the Nucleophile of the active site.

This sequence belongs to the class I-like SAM-binding methyltransferase superfamily. RNA M5U methyltransferase family. RlmD subfamily.

The enzyme catalyses uridine(1939) in 23S rRNA + S-adenosyl-L-methionine = 5-methyluridine(1939) in 23S rRNA + S-adenosyl-L-homocysteine + H(+). Its function is as follows. Catalyzes the formation of 5-methyl-uridine at position 1939 (m5U1939) in 23S rRNA. The protein is 23S rRNA (uracil(1939)-C(5))-methyltransferase RlmD of Pectobacterium carotovorum subsp. carotovorum (strain PC1).